The primary structure comprises 522 residues: MRKHTDKPQLASKLVLRRVAIDTYRENVAYLHRDCAVYRAEGFQALSKVEVRANGRHILATLNVVDDPNIVACNELGLSEDAFAQMAVIDGQPASVSQAEPPQSIGALRRKLAGERLGREDFLGIVRDIAELHYSKIELSAFVVATNRDELDREEVYFLTEAMVASGRTLNWHEPLVVDKHCIGGIPGNRSSMLVVPIVAAHGLLCPKTSSRAITSPAGTADTMEVLAKVELPVDQLADIVRTHRGCLAWGGAAHLSPADDVLISVERPLAIDSPGQMVASILSKKIAAGSTHLVLDIPIGPSAKVRSMPEAQRLRRLFEYVAGRMHLSLDVVVTDGRQPIGNGIGPVLEARDVMRVLENDPRAPNDLRQKSLRLAGRLIEFDPDVRGGDGFAIARDILDSGRALAKMNAIIAAQGAKPFDHNHPQLGALTFDICASESGVVTGIDNLQVARIARLAGAPKVIGAGIDLFHKLGEAVTSGEVLYRVHAGFQSDLDFARQACAKSTGYTLGRAEDVPHVFTEF.

It belongs to the thymidine/pyrimidine-nucleoside phosphorylase family. Type 2 subfamily.

The enzyme catalyses thymidine + phosphate = 2-deoxy-alpha-D-ribose 1-phosphate + thymine. The sequence is that of Putative thymidine phosphorylase from Albidiferax ferrireducens (strain ATCC BAA-621 / DSM 15236 / T118) (Rhodoferax ferrireducens).